A 410-amino-acid polypeptide reads, in one-letter code: Heme A synthase COX15 (410 aa).

The Mitochondrial matrix segment spans residues 1 to 67; sequence MQRLLFPPLR…VSLPSKAAER (67 aa). A helical transmembrane segment spans residues 68 to 88; it reads VVGRWLLVCSGTVAGAVILGG. The Mitochondrial intermembrane segment spans residues 89–153; sequence VTRLTESGLS…FIWYMEYSHR (65 aa). A heme o-binding site is contributed by His152. A helical membrane pass occupies residues 154–171; the sequence is MWGRLVGLVYILPAAYFW. Residues 172-183 are Mitochondrial matrix-facing; that stretch reads RKGWLSRGMKGR. Residues 184–204 form a helical membrane-spanning segment; that stretch reads VLALCGLVCFQGLLGWYMVKS. The Mitochondrial intermembrane segment spans residues 205–226; it reads GLEEKSDSHDIPRVSQYRLAAH. His226 contributes to the heme o binding site. Residues 227–247 form a helical membrane-spanning segment; it reads LGSALVLYCASLWTSLSLLLP. Topologically, residues 248–268 are mitochondrial matrix; it reads PHKLPETHQLLQLRRFAHGTA. A helical membrane pass occupies residues 269–289; it reads GLVFLTALSGAFVAGLDAGLV. The Mitochondrial intermembrane segment spans residues 290-323; sequence YNSFPKMGESWIPEDLFTFSPILRNVFENPTMVQ. A helical transmembrane segment spans residues 324–344; that stretch reads FDHRILGITSVTAITVLYFLS. A heme b-binding site is contributed by His326. Residues 345–356 lie on the Mitochondrial matrix side of the membrane; that stretch reads RRIPLPRRTKMA. Residues 357–377 form a helical membrane-spanning segment; it reads AVTLLALAYTQVGLGISTLLM. Topologically, residues 378-381 are mitochondrial intermembrane; the sequence is YVPT. Residues 382–402 form a helical membrane-spanning segment; the sequence is PLAATHQSGSLALLTGALWLM. His387 provides a ligand contact to heme b. Residues 403–410 lie on the Mitochondrial matrix side of the membrane; it reads NELRRVPK.

This sequence belongs to the COX15/CtaA family. Type 2 subfamily. The cofactor is heme b. Predominantly found in tissues characterized by high rates of oxidative phosphorylation (OxPhos), including muscle, heart, and brain.

The protein localises to the mitochondrion inner membrane. It catalyses the reaction Fe(II)-heme o + 2 A + H2O = Fe(II)-heme a + 2 AH2. It participates in porphyrin-containing compound metabolism; heme A biosynthesis; heme A from heme O: step 1/1. Catalyzes the second reaction in the biosynthesis of heme A, a prosthetic group of mitochondrial cytochrome c oxidase (CcO). Heme A is synthesized from heme B by two sequential enzymatic reactions catalyzed by heme O synthase (HOS) and heme A synthase (HAS). HAS catalyzes the conversion of heme O to heme A by two successive hydroxylations of the methyl group at C8, in a reaction that involves matrix ferredoxin and ferredoxin reductase. The first hydroxylation forms heme I, the second hydroxylation results in an unstable dihydroxymethyl group, which spontaneously dehydrates, resulting in the formyl group of heme A. The polypeptide is Heme A synthase COX15 (COX15) (Homo sapiens (Human)).